We begin with the raw amino-acid sequence, 344 residues long: Ribosomal RNA large subunit methyltransferase Cfr (344 aa).

Residue glutamate 90 is the Proton acceptor of the active site. One can recognise a Radical SAM core domain in the interval 97–330 (KQGWESFCIS…ATVRTQFGSE (234 aa)). A disulfide bridge connects residues cysteine 104 and cysteine 335. [4Fe-4S] cluster is bound by residues cysteine 111, cysteine 115, and cysteine 118. S-adenosyl-L-methionine-binding positions include 157 to 158 (GE), serine 188, 211 to 213 (SLH), and asparagine 292. Cysteine 335 acts as the S-methylcysteine intermediate in catalysis.

It belongs to the radical SAM superfamily. RlmN family. Cfr subfamily. The cofactor is [4Fe-4S] cluster.

The protein resides in the cytoplasm. The enzyme catalyses adenosine(2503) in 23S rRNA + 2 reduced [2Fe-2S]-[ferredoxin] + 2 S-adenosyl-L-methionine = 8-methyladenosine(2503) in 23S rRNA + 5'-deoxyadenosine + L-methionine + 2 oxidized [2Fe-2S]-[ferredoxin] + S-adenosyl-L-homocysteine. Functionally, specifically methylates position 8 of adenine 2503 in 23S rRNA. Confers resistance to some classes of antibiotics. The polypeptide is Ribosomal RNA large subunit methyltransferase Cfr (Clostridium botulinum (strain Okra / Type B1)).